A 94-amino-acid polypeptide reads, in one-letter code: Potassium channel protein kcv (94 aa).

The chain crosses the membrane as a helical span at residues 14-34 (FMIHLFILAMFVMIYKFFPGG). An N-linked (GlcNAc...) asparagine; by host glycan is attached at Asn-38. The helical transmembrane segment at 74–94 (TGAKLCTIAHIVTVFFIVLTL) threads the bilayer.

It belongs to the two pore domain potassium channel (TC 1.A.1.12) family.

Its subcellular location is the membrane. Functionally, potassium-selective channel essential in the virus replication cycle. May be involved in preventing multiple infections (Potential). This is Potassium channel protein kcv (A250R) from Paramecium bursaria Chlorella virus 1 (PBCV-1).